The sequence spans 227 residues: 7-cyano-7-deazaguanine synthase (227 aa).

8-18 lines the ATP pocket; it reads FSGGQDSTTCL. Zn(2+) contacts are provided by Cys187, Cys196, Cys199, and Cys202.

This sequence belongs to the QueC family. Zn(2+) is required as a cofactor.

The enzyme catalyses 7-carboxy-7-deazaguanine + NH4(+) + ATP = 7-cyano-7-deazaguanine + ADP + phosphate + H2O + H(+). Its pathway is purine metabolism; 7-cyano-7-deazaguanine biosynthesis. Its function is as follows. Catalyzes the ATP-dependent conversion of 7-carboxy-7-deazaguanine (CDG) to 7-cyano-7-deazaguanine (preQ(0)). The polypeptide is 7-cyano-7-deazaguanine synthase (Aliivibrio fischeri (strain MJ11) (Vibrio fischeri)).